Here is a 412-residue protein sequence, read N- to C-terminus: MLAAPLPSFSTDAFDQVVMSTYGRFPITLVRGEGCRVWDDQGRSYLDFVAGIATCTLGHAHPALVETVSRQMQTLHHVSNLYYIPQQGALAQWLVAHSCGDRVFFCNSGAEANEAAIKLARKYAHTVRHIANPIIITAQASFHGRTLATITATGQPKYQKYFDPLVPGFAYVPYNDLGALEALVASLDQPQPQVAAILLEPLQGEGGVRPGDRAYFEQVRQLCTEKGILLIFDEVQVGMGRTGSLWGYETLGVEPDIFTSAKGLAGGVPIGAMIAKEFCAVFQPGDHASTFGGNPLATAAALTVCETLEKENLLENVRDRGQQLRTGLQELAAAYPQVIAEVRGWGLINGLELQPDTPLTAAEVVKAALAEGLLLVPAGPKVVRFVPPLIVSATEIDMALGAMSRALAHLAA.

Residues 109–110 and Phe142 contribute to the pyridoxal 5'-phosphate site; that span reads GA. Arg145 contributes to the N(2)-acetyl-L-ornithine binding site. 233–236 is a pyridoxal 5'-phosphate binding site; that stretch reads DEVQ. Position 262 is an N6-(pyridoxal phosphate)lysine (Lys262). Ser289 contacts N(2)-acetyl-L-ornithine. Thr290 is a binding site for pyridoxal 5'-phosphate.

It belongs to the class-III pyridoxal-phosphate-dependent aminotransferase family. ArgD subfamily. In terms of assembly, homodimer. Pyridoxal 5'-phosphate is required as a cofactor.

The protein localises to the cytoplasm. It catalyses the reaction N(2)-acetyl-L-ornithine + 2-oxoglutarate = N-acetyl-L-glutamate 5-semialdehyde + L-glutamate. Its pathway is amino-acid biosynthesis; L-arginine biosynthesis; N(2)-acetyl-L-ornithine from L-glutamate: step 4/4. The protein is Acetylornithine aminotransferase of Thermosynechococcus vestitus (strain NIES-2133 / IAM M-273 / BP-1).